The chain runs to 83 residues: Vitellogenesis-inhibiting hormone (83 aa).

3 disulfide bridges follow: cysteine 15-cysteine 52, cysteine 32-cysteine 48, and cysteine 35-cysteine 61.

As to expression, found in the sinus glands of both male and female. Found also in the brain; the neuroendocrine structures of the protocerebrum.

Its subcellular location is the secreted. Functionally, inhibits secondary vitellogenesis in females. Has no hyperglycemic or molt-inhibiting activity. This chain is Vitellogenesis-inhibiting hormone, found in Armadillidium vulgare (Pillbug).